The chain runs to 213 residues: Uridine kinase (213 aa).

15–22 (GGSGSGKT) lines the ATP pocket.

Belongs to the uridine kinase family.

The protein resides in the cytoplasm. It carries out the reaction uridine + ATP = UMP + ADP + H(+). The enzyme catalyses cytidine + ATP = CMP + ADP + H(+). It functions in the pathway pyrimidine metabolism; CTP biosynthesis via salvage pathway; CTP from cytidine: step 1/3. The protein operates within pyrimidine metabolism; UMP biosynthesis via salvage pathway; UMP from uridine: step 1/1. The polypeptide is Uridine kinase (Ligilactobacillus salivarius (strain UCC118) (Lactobacillus salivarius)).